The chain runs to 251 residues: 5'-nucleotidase SurE (251 aa).

Residues D8, D9, S40, and N95 each coordinate a divalent metal cation.

The protein belongs to the SurE nucleotidase family. It depends on a divalent metal cation as a cofactor.

It is found in the cytoplasm. It carries out the reaction a ribonucleoside 5'-phosphate + H2O = a ribonucleoside + phosphate. Functionally, nucleotidase that shows phosphatase activity on nucleoside 5'-monophosphates. The protein is 5'-nucleotidase SurE of Maridesulfovibrio salexigens (strain ATCC 14822 / DSM 2638 / NCIMB 8403 / VKM B-1763) (Desulfovibrio salexigens).